The primary structure comprises 283 residues: Cytosolic Fe-S cluster assembly factor CFD1 (283 aa).

Residue 26 to 33 participates in ATP binding; the sequence is GKGGVGKS. The [4Fe-4S] cluster site is built by Cys202 and Cys205.

This sequence belongs to the Mrp/NBP35 ATP-binding proteins family. NUBP2/CFD1 subfamily. As to quaternary structure, heterotetramer of 2 NBP35 and 2 CFD1 chains. The cofactor is [4Fe-4S] cluster.

The protein localises to the cytoplasm. Functionally, component of the cytosolic iron-sulfur (Fe/S) protein assembly (CIA) machinery. Required for maturation of extramitochondrial Fe-S proteins. The NBP35-CFD1 heterotetramer forms a Fe-S scaffold complex, mediating the de novo assembly of an Fe-S cluster and its transfer to target apoproteins. Required for biogenesis and export of both ribosomal subunits, which may reflect a role in assembly of the Fe/S clusters in RLI1, a protein which performs rRNA processing and ribosome export. This is Cytosolic Fe-S cluster assembly factor CFD1 from Kluyveromyces lactis (strain ATCC 8585 / CBS 2359 / DSM 70799 / NBRC 1267 / NRRL Y-1140 / WM37) (Yeast).